Here is a 481-residue protein sequence, read N- to C-terminus: Proline--tRNA ligase (481 aa).

The protein belongs to the class-II aminoacyl-tRNA synthetase family. ProS type 3 subfamily. Homodimer.

The protein localises to the cytoplasm. The enzyme catalyses tRNA(Pro) + L-proline + ATP = L-prolyl-tRNA(Pro) + AMP + diphosphate. In terms of biological role, catalyzes the attachment of proline to tRNA(Pro) in a two-step reaction: proline is first activated by ATP to form Pro-AMP and then transferred to the acceptor end of tRNA(Pro). The sequence is that of Proline--tRNA ligase from Saccharolobus islandicus (strain Y.N.15.51 / Yellowstone #2) (Sulfolobus islandicus).